Consider the following 338-residue polypeptide: MKTDDFDYKLPEELIASYPLENRDASRLLKLNKQTGEIADYKFTDFIDFINPGDLLVFNNSKVMLARLYGSKTTGAKLEYLIERIKNPKLFETHIKANRSPAIGSEIYVEDTLAKVLDKDGGMYLLEIQGDKDIYQLMEEFGHIPLPPYMKRDDEEFDAERYQTVYAQDLGSVAAPTAGLHFSKELMQQIKDKGVDIAYITLHVGSGTFKPVQVDDVESHKMHAEVISVPVEVCQKIRQTKENGGRVIAIGTTSVRSLETAGQNGQIEPYQGETDIFLYPGKKFNVVDAMITNFHLPKSTLIMLVSAFADKEKIIKAYEHAIAERYRFFSYGDAMFIF.

It belongs to the QueA family. In terms of assembly, monomer.

It is found in the cytoplasm. The catalysed reaction is 7-aminomethyl-7-carbaguanosine(34) in tRNA + S-adenosyl-L-methionine = epoxyqueuosine(34) in tRNA + adenine + L-methionine + 2 H(+). Its pathway is tRNA modification; tRNA-queuosine biosynthesis. Its function is as follows. Transfers and isomerizes the ribose moiety from AdoMet to the 7-aminomethyl group of 7-deazaguanine (preQ1-tRNA) to give epoxyqueuosine (oQ-tRNA). This chain is S-adenosylmethionine:tRNA ribosyltransferase-isomerase, found in Francisella tularensis subsp. tularensis (strain WY96-3418).